Reading from the N-terminus, the 347-residue chain is Histidinol-phosphate aminotransferase (347 aa).

Position 209 is an N6-(pyridoxal phosphate)lysine (lysine 209).

The protein belongs to the class-II pyridoxal-phosphate-dependent aminotransferase family. Histidinol-phosphate aminotransferase subfamily. As to quaternary structure, homodimer. Pyridoxal 5'-phosphate is required as a cofactor.

The catalysed reaction is L-histidinol phosphate + 2-oxoglutarate = 3-(imidazol-4-yl)-2-oxopropyl phosphate + L-glutamate. It functions in the pathway amino-acid biosynthesis; L-histidine biosynthesis; L-histidine from 5-phospho-alpha-D-ribose 1-diphosphate: step 7/9. The polypeptide is Histidinol-phosphate aminotransferase (Syntrophotalea carbinolica (strain DSM 2380 / NBRC 103641 / GraBd1) (Pelobacter carbinolicus)).